A 258-amino-acid polypeptide reads, in one-letter code: Global transcriptional regulator CodY (258 aa).

Residues 1–156 form a GAF domain region; sequence MSSLLDKTRM…SATIIGLEIL (156 aa). Residues 204–223 constitute a DNA-binding region (H-T-H motif); sequence ASKIADKVGITRSVIVNALR.

The protein belongs to the CodY family.

It is found in the cytoplasm. DNA-binding global transcriptional regulator which is involved in the adaptive response to starvation and acts by directly or indirectly controlling the expression of numerous genes in response to nutrient availability. During rapid exponential growth, CodY is highly active and represses genes whose products allow adaptation to nutrient depletion. In Clostridium botulinum (strain Okra / Type B1), this protein is Global transcriptional regulator CodY.